The chain runs to 194 residues: Protein GrpE (194 aa).

Positions 1–39 (MTNHEQDQQDNSELLDDDQVTLESQQAADSGAEAPASDD) are disordered. The segment covering 8–20 (QQDNSELLDDDQV) has biased composition (acidic residues).

It belongs to the GrpE family. As to quaternary structure, homodimer.

Its subcellular location is the cytoplasm. Its function is as follows. Participates actively in the response to hyperosmotic and heat shock by preventing the aggregation of stress-denatured proteins, in association with DnaK and GrpE. It is the nucleotide exchange factor for DnaK and may function as a thermosensor. Unfolded proteins bind initially to DnaJ; upon interaction with the DnaJ-bound protein, DnaK hydrolyzes its bound ATP, resulting in the formation of a stable complex. GrpE releases ADP from DnaK; ATP binding to DnaK triggers the release of the substrate protein, thus completing the reaction cycle. Several rounds of ATP-dependent interactions between DnaJ, DnaK and GrpE are required for fully efficient folding. The sequence is that of Protein GrpE from Saccharophagus degradans (strain 2-40 / ATCC 43961 / DSM 17024).